The following is a 272-amino-acid chain: GPN-loop GTPase 3 (272 aa).

Position 13-18 (13-18 (GAGKST)) interacts with GTP. The Gly-Pro-Asn (GPN)-loop; involved in dimer interface signature appears at 70–72 (GPN). A GTP-binding site is contributed by 173–176 (SKLD).

The protein belongs to the GPN-loop GTPase family. Heterodimers with NPA3/GPN1 or GPN2. Binds to RNA polymerase II (RNAPII).

Functionally, small GTPase required for proper nuclear localization of RNA polymerase II and III (RNAPII and RNAPIII). May act at an RNAP assembly step prior to nuclear import. Promotes sister chromatid separation during anaphase. In Saccharomyces cerevisiae (strain ATCC 204508 / S288c) (Baker's yeast), this protein is GPN-loop GTPase 3.